Here is a 355-residue protein sequence, read N- to C-terminus: Anthranilate phosphoribosyltransferase (355 aa).

Residues Gly-99, 102–103, Thr-107, 109–112, 127–135, and Ser-139 each bind 5-phospho-alpha-D-ribose 1-diphosphate; these read GD, NIST, and KHGNRSVSS. Residue Gly-99 participates in anthranilate binding. Ser-111 is a binding site for Mg(2+). Residue Asn-130 coordinates anthranilate. Position 185 (Arg-185) interacts with anthranilate. Asp-243 and Glu-244 together coordinate Mg(2+).

The protein belongs to the anthranilate phosphoribosyltransferase family. As to quaternary structure, homodimer. The cofactor is Mg(2+).

The enzyme catalyses N-(5-phospho-beta-D-ribosyl)anthranilate + diphosphate = 5-phospho-alpha-D-ribose 1-diphosphate + anthranilate. Its pathway is amino-acid biosynthesis; L-tryptophan biosynthesis; L-tryptophan from chorismate: step 2/5. Its function is as follows. Catalyzes the transfer of the phosphoribosyl group of 5-phosphorylribose-1-pyrophosphate (PRPP) to anthranilate to yield N-(5'-phosphoribosyl)-anthranilate (PRA). This Pseudoalteromonas translucida (strain TAC 125) protein is Anthranilate phosphoribosyltransferase.